A 403-amino-acid chain; its full sequence is Acetate kinase (403 aa).

Asn-8 contributes to the Mg(2+) binding site. Position 15 (Lys-15) interacts with ATP. Arg-90 contributes to the substrate binding site. Asp-147 serves as the catalytic Proton donor/acceptor. ATP is bound by residues 207–211, 282–284, and 330–334; these read HLGSG, DLR, and GVGEN. Glu-384 serves as a coordination point for Mg(2+).

This sequence belongs to the acetokinase family. As to quaternary structure, homodimer. It depends on Mg(2+) as a cofactor. Requires Mn(2+) as cofactor.

The protein resides in the cytoplasm. The enzyme catalyses acetate + ATP = acetyl phosphate + ADP. Its pathway is metabolic intermediate biosynthesis; acetyl-CoA biosynthesis; acetyl-CoA from acetate: step 1/2. Functionally, catalyzes the formation of acetyl phosphate from acetate and ATP. Can also catalyze the reverse reaction. This is Acetate kinase from Exiguobacterium sp. (strain ATCC BAA-1283 / AT1b).